The sequence spans 76 residues: Sec-independent protein translocase protein TatA (76 aa).

Residues 1–21 (MGSFSIWHWLIVLAVVLLLFG) form a helical membrane-spanning segment. Residues 43-76 (MSDEDAKDDARDSGRTIDAKADETVNDVKKTTKS) are disordered. Residues 50-76 (DDARDSGRTIDAKADETVNDVKKTTKS) are compositionally biased toward basic and acidic residues.

The protein belongs to the TatA/E family. In terms of assembly, the Tat system comprises two distinct complexes: a TatABC complex, containing multiple copies of TatA, TatB and TatC subunits, and a separate TatA complex, containing only TatA subunits. Substrates initially bind to the TatABC complex, which probably triggers association of the separate TatA complex to form the active translocon.

It localises to the cell inner membrane. Part of the twin-arginine translocation (Tat) system that transports large folded proteins containing a characteristic twin-arginine motif in their signal peptide across membranes. TatA could form the protein-conducting channel of the Tat system. The chain is Sec-independent protein translocase protein TatA from Brucella anthropi (strain ATCC 49188 / DSM 6882 / CCUG 24695 / JCM 21032 / LMG 3331 / NBRC 15819 / NCTC 12168 / Alc 37) (Ochrobactrum anthropi).